We begin with the raw amino-acid sequence, 131 residues long: Phosphomevalonate dehydratase small subunit (131 aa).

The active-site Proton acceptor is Ser-62.

It belongs to the AcnX type II small subunit family. In terms of assembly, heterodimer composed of a large subunit (PMDh-L) and a small subunit (PMDh-S).

The catalysed reaction is (R)-5-phosphomevalonate = (2E)-3-methyl-5-phosphooxypent-2-enoate + H2O. Its pathway is isoprenoid biosynthesis; isopentenyl diphosphate biosynthesis via mevalonate pathway. In terms of biological role, component of a hydro-lyase that catalyzes the dehydration of mevalonate 5-phosphate (MVA5P) to form trans-anhydromevalonate 5-phosphate (tAHMP). Involved in the archaeal mevalonate (MVA) pathway, which provides fundamental precursors for isoprenoid biosynthesis, such as isopentenyl diphosphate (IPP) and dimethylallyl diphosphate (DMAPP). This chain is Phosphomevalonate dehydratase small subunit, found in Thermococcus gammatolerans (strain DSM 15229 / JCM 11827 / EJ3).